Consider the following 526-residue polypeptide: Na(+)/H(+) antiporter NhaB (526 aa).

13 helical membrane passes run F14–P34, L35–F55, M99–F119, L122–F142, F146–I166, L206–P226, F239–L259, A307–I327, G328–G348, F357–F377, Y397–I417, A451–I471, and V479–F499.

Belongs to the NhaB Na(+)/H(+) (TC 2.A.34) antiporter family.

The protein localises to the cell inner membrane. The catalysed reaction is 2 Na(+)(in) + 3 H(+)(out) = 2 Na(+)(out) + 3 H(+)(in). In terms of biological role, na(+)/H(+) antiporter that extrudes sodium in exchange for external protons. This chain is Na(+)/H(+) antiporter NhaB, found in Pectobacterium atrosepticum (strain SCRI 1043 / ATCC BAA-672) (Erwinia carotovora subsp. atroseptica).